The chain runs to 67 residues: Large ribosomal subunit protein bL35 (67 aa).

This sequence belongs to the bacterial ribosomal protein bL35 family.

The sequence is that of Large ribosomal subunit protein bL35 from Leptospira borgpetersenii serovar Hardjo-bovis (strain JB197).